A 184-amino-acid polypeptide reads, in one-letter code: Large ribosomal subunit protein uL6 (184 aa).

This sequence belongs to the universal ribosomal protein uL6 family. In terms of assembly, part of the 50S ribosomal subunit.

This protein binds to the 23S rRNA, and is important in its secondary structure. It is located near the subunit interface in the base of the L7/L12 stalk, and near the tRNA binding site of the peptidyltransferase center. This Thermosipho africanus (strain TCF52B) protein is Large ribosomal subunit protein uL6.